Reading from the N-terminus, the 339-residue chain is Heat-inducible transcription repressor HrcA (339 aa).

The protein belongs to the HrcA family.

In terms of biological role, negative regulator of class I heat shock genes (grpE-dnaK-dnaJ and groELS operons). Prevents heat-shock induction of these operons. This is Heat-inducible transcription repressor HrcA from Clostridium perfringens (strain SM101 / Type A).